The sequence spans 752 residues: Pre-mRNA-processing factor 39 (752 aa).

The tract at residues 1-148 (MEDSGESMTG…DPAAPQEPEL (148 aa)) is disordered. Residues 28 to 42 (TTGTDDVTGLSTSDL) show a composition bias toward polar residues. 3 stretches are compositionally biased toward low complexity: residues 43-56 (TTEQ…QTQP), 76-94 (QSAS…PPES), and 133-148 (EPAA…EPEL). 3 HAT repeats span residues 180–212 (NHLL…IERK), 214–246 (GYIQ…FLRE), and 254–289 (EAES…WETE). The tract at residues 347–374 (NKPSGDEDAETEAPGEELPPGTEDLPDP) is disordered. The segment covering 352 to 361 (DEDAETEAPG) has biased composition (acidic residues). HAT repeat units lie at residues 408–440 (AFEE…FELE) and 442–474 (GTPE…YLES). Over residues 678 to 699 (SFKRKAENGSEEPDAKRQRTDD) the composition is skewed to basic and acidic residues. Residues 678-703 (SFKRKAENGSEEPDAKRQRTDDQSVA) are disordered. The HAT 6 repeat unit spans residues 700 to 731 (QSVASGQMMDMQANHAGYNYNNWYQYNSWGSQ).

It belongs to the PRP39 family.

The protein resides in the nucleus. Functionally, involved in pre-mRNA splicing. In Danio rerio (Zebrafish), this protein is Pre-mRNA-processing factor 39 (prpf39).